Here is a 339-residue protein sequence, read N- to C-terminus: tRNA N6-adenosine threonylcarbamoyltransferase (339 aa).

The Fe cation site is built by His-114 and His-118. Substrate-binding positions include Val-137–Gly-141, Asp-170, Gly-183, Asp-187, and Asn-277. Asp-305 provides a ligand contact to Fe cation.

The protein belongs to the KAE1 / TsaD family. Requires Fe(2+) as cofactor.

The protein resides in the cytoplasm. The catalysed reaction is L-threonylcarbamoyladenylate + adenosine(37) in tRNA = N(6)-L-threonylcarbamoyladenosine(37) in tRNA + AMP + H(+). Its function is as follows. Required for the formation of a threonylcarbamoyl group on adenosine at position 37 (t(6)A37) in tRNAs that read codons beginning with adenine. Is involved in the transfer of the threonylcarbamoyl moiety of threonylcarbamoyl-AMP (TC-AMP) to the N6 group of A37, together with TsaE and TsaB. TsaD likely plays a direct catalytic role in this reaction. The chain is tRNA N6-adenosine threonylcarbamoyltransferase from Clostridium beijerinckii (strain ATCC 51743 / NCIMB 8052) (Clostridium acetobutylicum).